The primary structure comprises 281 residues: NADPH-dependent 7-cyano-7-deazaguanine reductase (281 aa).

Val-87–Ser-89 contributes to the substrate binding site. An NADPH-binding site is contributed by Ser-89–Lys-90. Cys-188 functions as the Thioimide intermediate in the catalytic mechanism. The Proton donor role is filled by Asp-195. His-227–Glu-228 contributes to the substrate binding site. Residue Arg-256–Gly-257 coordinates NADPH.

The protein belongs to the GTP cyclohydrolase I family. QueF type 2 subfamily. As to quaternary structure, homodimer.

It is found in the cytoplasm. The catalysed reaction is 7-aminomethyl-7-carbaguanine + 2 NADP(+) = 7-cyano-7-deazaguanine + 2 NADPH + 3 H(+). It participates in tRNA modification; tRNA-queuosine biosynthesis. Catalyzes the NADPH-dependent reduction of 7-cyano-7-deazaguanine (preQ0) to 7-aminomethyl-7-deazaguanine (preQ1). The protein is NADPH-dependent 7-cyano-7-deazaguanine reductase of Aliivibrio fischeri (strain ATCC 700601 / ES114) (Vibrio fischeri).